Here is a 213-residue protein sequence, read N- to C-terminus: Protein DMP3 (213 aa).

The tract at residues 1–27 (MSSPSSLTQRNPTSSQEQSESVPQLRR) is disordered. 4 consecutive transmembrane segments (helical) span residues 45–65 (LANL…PVFT), 74–94 (TQVL…LSSF), 136–156 (IRII…AVAL), and 176–196 (VLDI…LVFP).

It belongs to the plant DMP1 protein family. As to expression, expressed in leaves, siliques and roots (e.g. root hairs).

The protein resides in the endoplasmic reticulum membrane. Involved in membrane remodeling. The sequence is that of Protein DMP3 from Arabidopsis thaliana (Mouse-ear cress).